The primary structure comprises 689 residues: Glycine--tRNA ligase beta subunit (689 aa).

This sequence belongs to the class-II aminoacyl-tRNA synthetase family. In terms of assembly, tetramer of two alpha and two beta subunits.

The protein resides in the cytoplasm. The enzyme catalyses tRNA(Gly) + glycine + ATP = glycyl-tRNA(Gly) + AMP + diphosphate. This chain is Glycine--tRNA ligase beta subunit, found in Salmonella heidelberg (strain SL476).